Consider the following 165-residue polypeptide: Protein FAM219A (165 aa).

Met-1 is modified (N-acetylmethionine). The interval 1–114 is disordered; the sequence is MMEEIDRFQV…SRYSSSGYSS (114 aa). Over residues 32–44 the composition is skewed to basic and acidic residues; the sequence is CDAREEKQRELAR. The segment covering 49–63 has biased composition (polar residues); that stretch reads KNGSMGSPVNQQPKK. Ser-55 and Ser-85 each carry phosphoserine. The residue at position 96 (Thr-96) is a Phosphothreonine. Phosphoserine is present on residues Ser-98 and Ser-105. Over residues 105–114 the composition is skewed to low complexity; sequence SRYSSSGYSS.

It belongs to the FAM219 family.

This Macaca fascicularis (Crab-eating macaque) protein is Protein FAM219A (FAM219A).